Reading from the N-terminus, the 212-residue chain is ATP-dependent Clp protease proteolytic subunit (212 aa).

The active-site Nucleophile is the S109. H134 is a catalytic residue.

Belongs to the peptidase S14 family. Fourteen ClpP subunits assemble into 2 heptameric rings which stack back to back to give a disk-like structure with a central cavity, resembling the structure of eukaryotic proteasomes.

It localises to the cytoplasm. The enzyme catalyses Hydrolysis of proteins to small peptides in the presence of ATP and magnesium. alpha-casein is the usual test substrate. In the absence of ATP, only oligopeptides shorter than five residues are hydrolyzed (such as succinyl-Leu-Tyr-|-NHMec, and Leu-Tyr-Leu-|-Tyr-Trp, in which cleavage of the -Tyr-|-Leu- and -Tyr-|-Trp bonds also occurs).. Cleaves peptides in various proteins in a process that requires ATP hydrolysis. Has a chymotrypsin-like activity. Plays a major role in the degradation of misfolded proteins. The chain is ATP-dependent Clp protease proteolytic subunit from Bdellovibrio bacteriovorus (strain ATCC 15356 / DSM 50701 / NCIMB 9529 / HD100).